We begin with the raw amino-acid sequence, 185 residues long: UPF0200 protein TON_1344 (185 aa).

Residue 7 to 14 (GMPGSGKS) coordinates ATP.

The protein belongs to the UPF0200 family.

The sequence is that of UPF0200 protein TON_1344 from Thermococcus onnurineus (strain NA1).